Reading from the N-terminus, the 409-residue chain is Histidine--tRNA ligase (409 aa).

It belongs to the class-II aminoacyl-tRNA synthetase family. Homodimer.

Its subcellular location is the cytoplasm. It carries out the reaction tRNA(His) + L-histidine + ATP = L-histidyl-tRNA(His) + AMP + diphosphate + H(+). This Campylobacter fetus subsp. fetus (strain 82-40) protein is Histidine--tRNA ligase.